An 892-amino-acid chain; its full sequence is MDHYDSQQTNDYMQPEEDWDRDLLLDPAWEKQQRKTFTAWCNSHLRKAGTQIENIEEDFRDGLKLMLLLEVISGERLAKPERGKMRVHKISNVNKALDFIASKGVKLVSIGAEEIVDGNVKMTLGMIWTIILRFAIQDISVEETSAKEGLLLWCQRKTAPYKNVNIQNFHISWKDGLGFCALIHRHRPELIDYGKLRKDDPLTNLNTAFDVAEKYLDIPKMLDAEDIVGTARPDEKAIMTYVSSFYHAFSGAQKAETAANRICKVLAVNQENEQLMEDYEKLASDLLEWIRRTIPWLENRAPENTMHAMQQKLEDFRDYRRLHKPPKVQEKCQLEINFNTLQTKLRLSNRPAFMPSEGRMVSDINNAWGCLEQAEKGYEEWLLNEIRRLERLDHLAEKFRQKASIHEAWTDGKEAMLRQKDYETATLSEIKALLKKHEAFESDLAAHQDRVEQIAAIAQELNELDYYDSPSVNARCQKICDQWDNLGALTQKRREALERTEKLLETIDQLYLEYAKRAAPFNNWMEGAMEDLQDTFIVHTIEEIQGLTTAHEQFKATLPDADKERLAILGIHNEVSKIVQTYHVNMAGTNPYTTITPQEINGKWDHVRQLVPRRDQALTEEHARQQHNERLRKQFGAQANVIGPWIQTKMEEIGRISIEMHGTLEDQLNHLRQYEKSIVNYKPKIDQLEGDHQLIQEALIFDNKHTNYTMEHIRVGWEQLLTTIARTINEVENQILTRDAKGISQEQMNEFRASFNHFDRDHSGTLGPEEFKACLISLGYDIGNDPQGEAEFARIMSIVDPNRLGVVTFQAFIDFMSRETADTDTADQVMASFKILAGDKNYITVDELRRELPPDQAEYCIARMAPYTGPDAVPGALDYMSFSTALYGESDL.

Met-1 carries the post-translational modification N-acetylmethionine. An actin-binding region spans residues Met-1–His-247. At Ser-6 the chain carries Phosphoserine. Phosphotyrosine; by FAK1 is present on Tyr-12. 2 consecutive Calponin-homology (CH) domains span residues Lys-31–Ala-135 and Thr-144–Ser-250. Residues Lys-95 and Lys-195 each carry the N6-acetyllysine modification. Spectrin repeat units lie at residues Gln-274 to Asn-384, His-394 to Arg-499, Gln-509 to Glu-620, and Arg-630 to Asn-733. Residues Gln-274–Asn-733 form an interaction with DDN region. At Ser-471 the chain carries Phosphoserine. At Lys-676 the chain carries N6-acetyllysine. Ser-677 bears the Phosphoserine mark. 2 EF-hand domains span residues Glu-746–Asp-781 and Gln-787–Asp-822. Asp-759, Asp-761, Ser-763, Thr-765, and Glu-770 together coordinate Ca(2+). Ser-890 carries the post-translational modification Phosphoserine.

Belongs to the alpha-actinin family. Homodimer; antiparallel. Interacts with MYOZ2, TTID and LPP. Interacts with DDN. Interacts with PSD. Interacts with MICALL2. Interacts with DNM2 and CTTN. Interacts with PDLIM1. Interacts with PDLIM2. Interacts with PDLIM4 (via PDZ domain). Interacts with IGSF8.

Its subcellular location is the cytoplasm. The protein localises to the cytoskeleton. The protein resides in the myofibril. It is found in the sarcomere. It localises to the z line. Its subcellular location is the cell membrane. The protein localises to the cell junction. The protein resides in the cell projection. It is found in the ruffle. Functionally, F-actin cross-linking protein which is thought to anchor actin to a variety of intracellular structures. Association with IGSF8 regulates the immune synapse formation and is required for efficient T-cell activation. This is Alpha-actinin-1 (ACTN1) from Bos taurus (Bovine).